The following is a 429-amino-acid chain: 3-phosphoshikimate 1-carboxyvinyltransferase (429 aa).

3 residues coordinate 3-phosphoshikimate: Lys11, Ser12, and Arg16. Lys11 contacts phosphoenolpyruvate. The phosphoenolpyruvate site is built by Gly82 and Arg110. Residues Ser155, Gln157, Asp302, and Lys329 each contribute to the 3-phosphoshikimate site. Position 157 (Gln157) interacts with phosphoenolpyruvate. Residue Asp302 is the Proton acceptor of the active site. The phosphoenolpyruvate site is built by Arg333 and Arg385.

Belongs to the EPSP synthase family. In terms of assembly, monomer.

The protein resides in the cytoplasm. It catalyses the reaction 3-phosphoshikimate + phosphoenolpyruvate = 5-O-(1-carboxyvinyl)-3-phosphoshikimate + phosphate. It functions in the pathway metabolic intermediate biosynthesis; chorismate biosynthesis; chorismate from D-erythrose 4-phosphate and phosphoenolpyruvate: step 6/7. Its function is as follows. Catalyzes the transfer of the enolpyruvyl moiety of phosphoenolpyruvate (PEP) to the 5-hydroxyl of shikimate-3-phosphate (S3P) to produce enolpyruvyl shikimate-3-phosphate and inorganic phosphate. The chain is 3-phosphoshikimate 1-carboxyvinyltransferase from Helicobacter pylori (strain ATCC 700392 / 26695) (Campylobacter pylori).